The primary structure comprises 161 residues: Small ribosomal subunit protein uS9 (161 aa).

This sequence belongs to the universal ribosomal protein uS9 family.

The protein is Small ribosomal subunit protein uS9 (rpsI) of Rickettsia prowazekii (strain Madrid E).